The chain runs to 255 residues: Hydroxyacylglutathione hydrolase (255 aa).

The Zn(2+) site is built by His-56, His-58, Asp-60, His-61, His-114, Asp-133, and His-171.

This sequence belongs to the metallo-beta-lactamase superfamily. Glyoxalase II family. In terms of assembly, monomer. Zn(2+) serves as cofactor.

It carries out the reaction an S-(2-hydroxyacyl)glutathione + H2O = a 2-hydroxy carboxylate + glutathione + H(+). Its pathway is secondary metabolite metabolism; methylglyoxal degradation; (R)-lactate from methylglyoxal: step 2/2. Functionally, thiolesterase that catalyzes the hydrolysis of S-D-lactoyl-glutathione to form glutathione and D-lactic acid. The protein is Hydroxyacylglutathione hydrolase of Rhodopseudomonas palustris (strain BisB5).